We begin with the raw amino-acid sequence, 168 residues long: Cell division inhibitor SulA (168 aa).

The tract at residues 106–112 (ALLTGNY) is ftsZ binding. The segment at 161-168 (KIHSYLYH) is lon protease binding.

It belongs to the SulA family. Interacts with FtsZ. In terms of processing, is rapidly cleaved and degraded by the Lon protease once DNA damage is repaired.

Functionally, component of the SOS system and an inhibitor of cell division. Accumulation of SulA causes rapid cessation of cell division and the appearance of long, non-septate filaments. In the presence of GTP, binds a polymerization-competent form of FtsZ in a 1:1 ratio, thus inhibiting FtsZ polymerization and therefore preventing it from participating in the assembly of the Z ring. This mechanism prevents the premature segregation of damaged DNA to daughter cells during cell division. This Yersinia pseudotuberculosis serotype O:1b (strain IP 31758) protein is Cell division inhibitor SulA.